Reading from the N-terminus, the 337-residue chain is Cobalt-precorrin-5B C(1)-methyltransferase (337 aa).

The protein belongs to the CbiD family.

The catalysed reaction is Co-precorrin-5B + S-adenosyl-L-methionine = Co-precorrin-6A + S-adenosyl-L-homocysteine. It functions in the pathway cofactor biosynthesis; adenosylcobalamin biosynthesis; cob(II)yrinate a,c-diamide from sirohydrochlorin (anaerobic route): step 6/10. In terms of biological role, catalyzes the methylation of C-1 in cobalt-precorrin-5B to form cobalt-precorrin-6A. The chain is Cobalt-precorrin-5B C(1)-methyltransferase from Methanoculleus marisnigri (strain ATCC 35101 / DSM 1498 / JR1).